The following is a 346-amino-acid chain: Phosphoribosylformylglycinamidine cyclo-ligase (346 aa).

Belongs to the AIR synthase family.

Its subcellular location is the cytoplasm. The catalysed reaction is 2-formamido-N(1)-(5-O-phospho-beta-D-ribosyl)acetamidine + ATP = 5-amino-1-(5-phospho-beta-D-ribosyl)imidazole + ADP + phosphate + H(+). It functions in the pathway purine metabolism; IMP biosynthesis via de novo pathway; 5-amino-1-(5-phospho-D-ribosyl)imidazole from N(2)-formyl-N(1)-(5-phospho-D-ribosyl)glycinamide: step 2/2. The sequence is that of Phosphoribosylformylglycinamidine cyclo-ligase from Alteromonas mediterranea (strain DSM 17117 / CIP 110805 / LMG 28347 / Deep ecotype).